A 704-amino-acid polypeptide reads, in one-letter code: Glycine--tRNA ligase beta subunit (704 aa).

The protein belongs to the class-II aminoacyl-tRNA synthetase family. Tetramer of two alpha and two beta subunits.

It localises to the cytoplasm. The catalysed reaction is tRNA(Gly) + glycine + ATP = glycyl-tRNA(Gly) + AMP + diphosphate. The protein is Glycine--tRNA ligase beta subunit of Rhizobium johnstonii (strain DSM 114642 / LMG 32736 / 3841) (Rhizobium leguminosarum bv. viciae).